Consider the following 166-residue polypeptide: Transcriptional repressor NrdR (166 aa).

A zinc finger lies at 3 to 34; that stretch reads CIKCGNMEDKVIDSRPIKEGKSIRRRRECLRC. Positions 49 to 139 constitute an ATP-cone domain; the sequence is LFVKKRNGSI…VYCKFHDAKD (91 aa).

It belongs to the NrdR family. Zn(2+) is required as a cofactor.

Negatively regulates transcription of bacterial ribonucleotide reductase nrd genes and operons by binding to NrdR-boxes. The chain is Transcriptional repressor NrdR from Methylacidiphilum infernorum (isolate V4) (Methylokorus infernorum (strain V4)).